The chain runs to 256 residues: 5'-nucleotidase SurE (256 aa).

Residues aspartate 9, aspartate 10, serine 42, and asparagine 99 each coordinate a divalent metal cation.

Belongs to the SurE nucleotidase family. Requires a divalent metal cation as cofactor.

Its subcellular location is the cytoplasm. The enzyme catalyses a ribonucleoside 5'-phosphate + H2O = a ribonucleoside + phosphate. Nucleotidase that shows phosphatase activity on nucleoside 5'-monophosphates. This is 5'-nucleotidase SurE from Symbiobacterium thermophilum (strain DSM 24528 / JCM 14929 / IAM 14863 / T).